A 433-amino-acid polypeptide reads, in one-letter code: Probable dipeptidase (433 aa).

Cys20 is an active-site residue.

The protein belongs to the peptidase C69 family.

It catalyses the reaction an L-aminoacyl-L-amino acid + H2O = 2 an L-alpha-amino acid. In Salmonella dublin, this protein is Probable dipeptidase (pipD).